The sequence spans 334 residues: Galactinol synthase 3 (334 aa).

Lys97 is an active-site residue. 3 residues coordinate Mn(2+): Asp113, Asp115, and His251.

It belongs to the glycosyltransferase 8 family. Galactosyltransferase subfamily. A divalent metal cation serves as cofactor.

It is found in the cytoplasm. It catalyses the reaction myo-inositol + UDP-alpha-D-galactose = alpha-D-galactosyl-(1-&gt;3)-1D-myo-inositol + UDP + H(+). Functionally, galactinol synthase involved in the biosynthesis of raffinose family oligosaccharides (RFOs) that function as osmoprotectants. May promote plant stress tolerance. This chain is Galactinol synthase 3 (GOLS3), found in Arabidopsis thaliana (Mouse-ear cress).